Reading from the N-terminus, the 385-residue chain is Elsinochromes biosynthesis cluster protein HP2 (385 aa).

A signal peptide spans 1-22 (MVLLYILIMVALIPMYMTVVQD). 2 helical membrane-spanning segments follow: residues 94–114 (TVLSALLLTFVFFWRMLSMFD) and 148–168 (FYGQALYFGIMCLYTAHIVLW). N187 carries N-linked (GlcNAc...) asparagine glycosylation. A helical membrane pass occupies residues 209 to 229 (SWTFGQIVPIVLLVSPLVAAF). N-linked (GlcNAc...) asparagine glycosylation is present at N248. The next 2 membrane-spanning stretches (helical) occupy residues 309-329 (AILFWELHVLLAFMVIWLPLA) and 344-364 (YYAFPAAVGTFWLTVVIAVPF).

The protein resides in the membrane. In terms of biological role, part of the gene cluster that mediates the biosynthesis of elsinochromes, pigments consisting of at least four interconvertible tautomers (A, B, C and D) that have a core phenolic quinone to which various side chains are attached and which play an important role in fungal pathogenesis. The non-reducing polyketide synthase PKS1 was proposed to iteratively catalyze decarboxylation between acetyl-CoA and malonyl-CoA subunits for polyketide chain elongation. The released polyketide undergoes cyclization to form an aromatic ring, and proceeds via serial modification steps to produce the heptaketide back- bone of elsinochrome. As elsinochrome has a symmetrical structure, two identical heptaketides are fused to form a core 1,2-dihydrobenzo-perylene ring structure, which can then be successively modified to produce the various derivatives of elsinochrome. Some of these reactions may be cooperatively carried out, at least in part, by the products of RDT1, OXR1 and PKS1. PRF1, embedded within the elsinochrome cluster possibly functions to stabilize some of the biosynthetic enzymes required for elsinochrome production. As prefoldin is a hexamer containing 2 a and 4 b subunits, additional prefoldin subunits, whose coding genes may not immediately link to the elsinochrome biosynthetic gene cluster, are required to fulfill the chaperone function. In addition, no methyltransferase-coding gene exists within the biosynthetic gene cluster, even though elsinochrome has four methyl groups at positions C3, C7, C8 and C12. Apparently, the identified gene cluster does not contain the entire entourage of genes responsible for elsinochrome biosynthesis. Once elsinochrome is synthesized, it must be exported outside the fungal cells, which is probably accomplished by the ECT1 transporter, to avoid toxicity. The polypeptide is Elsinochromes biosynthesis cluster protein HP2 (Elsinoe fawcettii (Citrus scab fungus)).